A 119-amino-acid polypeptide reads, in one-letter code: cAMP-responsive element-binding protein-like 2 (119 aa).

Positions 1–23 (MDDSKIVAGKVKKPGKRGRKPAK) are disordered. Residues 10 to 21 (KVKKPGKRGRKP) show a composition bias toward basic residues. A bZIP domain is found at 23–86 (KIDLKAKLER…LAMDQGKIPS (64 aa)). Residues 29–60 (KLERSRQSARECRARKKLRYQYLEELVSSKER) are basic motif. The segment at 62–69 (ICALREEL) is leucine-zipper. A disordered region spans residues 95-119 (DEQKTPQSCSNKTTKNSKYSSSSGI). Over residues 102 to 119 (SCSNKTTKNSKYSSSSGI) the composition is skewed to low complexity.

This sequence belongs to the bZIP family. ATF subfamily.

The protein localises to the nucleus. In terms of biological role, probable regulator of creb1 transcriptional activity which is involved in adipose cells differentiation. May also play a regulatory role in the cell cycle. The sequence is that of cAMP-responsive element-binding protein-like 2 (crebl2) from Danio rerio (Zebrafish).